A 565-amino-acid chain; its full sequence is Probable transcription factor lepB (565 aa).

Residues 52–259 are fungal specific transcription factor domain; that stretch reads KRYAEDVTYL…PRNLDDRDLD (208 aa).

The protein resides in the nucleus. Functionally, probable transcription factor; part of the gene cluster 23 that mediates the biosynthesis of a family of 2-pyridones known as leporins. This Aspergillus flavus (strain ATCC 200026 / FGSC A1120 / IAM 13836 / NRRL 3357 / JCM 12722 / SRRC 167) protein is Probable transcription factor lepB.